The following is a 308-amino-acid chain: MTKTLVFGHKNPDTDTICSAISYAELKKAQGADIEAVRLGELNSETAFVLDYFQVTAPRLVQTVANEVSEVALVDHNERQQSVDDIDDVTVTAVVDHHRIANFETSDPLYYRAEPVGCTTTILLKMFRENEVEVSKTVAGLMLSAIISDTLLFQSPTCTEEDKVAAQKLAQIADVDIQSYGMEMLKAGADVSKKTVAELLLDAKEFNMNDNKVEIAQINVVDVNDVLSRRAEVEALMTQNIVDKGLDLYLFVITNILTNDSVGIAIGSKTAVVEEAYGVKFVENQAPLKGVVSRKKQVVPILTDTFAK.

Residues H9, D13, D15, D75, H97, and D149 each contribute to the Mn(2+) site.

Belongs to the PPase class C family. The cofactor is Mn(2+).

It localises to the cytoplasm. It carries out the reaction diphosphate + H2O = 2 phosphate + H(+). This chain is Probable manganese-dependent inorganic pyrophosphatase, found in Listeria monocytogenes serotype 4b (strain CLIP80459).